An 89-amino-acid chain; its full sequence is uncharacterized protein (89 aa).

The interval 31–89 (TPQPLEPHEHPKPMEPNEFDPKPDDPPRNPDPSPFPNEVPKPKPSDFPIPDELYPQPIV) is disordered. Basic and acidic residues predominate over residues 36-58 (EPHEHPKPMEPNEFDPKPDDPPR). Residues 59–69 (NPDPSPFPNEV) show a composition bias toward pro residues.

This is an uncharacterized protein from Dictyostelium discoideum (Social amoeba).